Reading from the N-terminus, the 1244-residue chain is Putative late blight resistance protein homolog R1A-4 (1244 aa).

Coiled coils occupy residues 411-434 and 526-548; these read RYSD…ESLQ and PRMN…QLLN. Positions 527 to 755 constitute an NB-ARC domain; it reads RMNEEIVGFK…ECWEQVANDL (229 aa). 560 to 567 contributes to the ATP binding site; that stretch reads GMPGLGKT. LRR repeat units follow at residues 978–1004, 1079–1103, 1127–1150, 1153–1178, and 1213–1237; these read LWNL…VWDM, PIRL…ISAP, LKNL…KVSN, FPQL…AFPN, and ESVV…NFKL.

The protein belongs to the disease resistance NB-LRR family.

Its subcellular location is the cytoplasm. It is found in the membrane. Functionally, confers resistance to late blight (Phytophthora infestans) races carrying the avirulence gene Avr1. Resistance proteins guard the plant against pathogens that contain an appropriate avirulence protein via an indirect interaction with this avirulence protein. That triggers a defense system including the hypersensitive response, which restricts the pathogen growth. In Solanum demissum (Wild potato), this protein is Putative late blight resistance protein homolog R1A-4 (R1A-4).